Here is a 353-residue protein sequence, read N- to C-terminus: N-formyl peptide receptor 3 (353 aa).

Residues 1–27 (METNFSIPLNETEEVLPEPAGHTVLWI) are Extracellular-facing. Asparagine 4 and asparagine 10 each carry an N-linked (GlcNAc...) asparagine glycan. A helical membrane pass occupies residues 28-50 (FSLLVHGVTFVFGVLGNGLVIWV). At 51-61 (AGFRMTRTVNT) the chain is on the cytoplasmic side. Residues 62–83 (ICYLNLALADFSFSAILPFRMV) traverse the membrane as a helical segment. The Extracellular portion of the chain corresponds to 84–100 (SVAMREKWPFGSFLCKL). The cysteines at positions 98 and 176 are disulfide-linked. Residues 101–121 (VHVMIDINLFVSVYLITIIAL) traverse the membrane as a helical segment. The Cytoplasmic portion of the chain corresponds to 122 to 140 (DRCICVLHPAWAQNHRTMS). A helical membrane pass occupies residues 141–162 (LAKRVMTGLWIFTIVLTLPNFI). At 163-205 (FWTTISTTNGDTYCIFNFAFWGDTAVERLNVFITMAKVFLILH) the chain is on the extracellular side. The helical transmembrane segment at 206–226 (FIIGFSVPMSIITVCYGIIAA) threads the bilayer. Residues 227-242 (KIHRNHMIKSSRPLRV) are Cytoplasmic-facing. The chain crosses the membrane as a helical span at residues 243 to 266 (FAAVVASFFICWFPYELIGILMAV). Residues 267-286 (WLKEMLLNGKYKIILVLINP) are Extracellular-facing. A helical transmembrane segment spans residues 287-306 (TSSLAFFNSCLNPILYVFMG). Topologically, residues 307–353 (RNFQERLIRSLPTSLERALTEVPDSAQTSNTDTTSASPPEETELQAM) are cytoplasmic. Residues 327-353 (EVPDSAQTSNTDTTSASPPEETELQAM) are disordered. The span at 331–343 (SAQTSNTDTTSAS) shows a compositional bias: polar residues.

The protein belongs to the G-protein coupled receptor 1 family. Detected in various tissues with highest expression in lung.

It is found in the cell membrane. Its function is as follows. Low affinity receptor for N-formyl-methionyl peptides, which are powerful neutrophils chemotactic factors. Binding of FMLP to the receptor causes activation of neutrophils. This response is mediated via a G-protein that activates a phosphatidylinositol-calcium second messenger system. Acts as a receptor for humanin. The chain is N-formyl peptide receptor 3 (FPR3) from Homo sapiens (Human).